We begin with the raw amino-acid sequence, 177 residues long: Protein GrpE (177 aa).

The disordered stretch occupies residues 1–26 (MSEEIKKDDLQEEVEATETEETVEEV). Acidic residues predominate over residues 10-26 (LQEEVEATETEETVEEV).

This sequence belongs to the GrpE family. As to quaternary structure, homodimer.

It localises to the cytoplasm. Participates actively in the response to hyperosmotic and heat shock by preventing the aggregation of stress-denatured proteins, in association with DnaK and GrpE. It is the nucleotide exchange factor for DnaK and may function as a thermosensor. Unfolded proteins bind initially to DnaJ; upon interaction with the DnaJ-bound protein, DnaK hydrolyzes its bound ATP, resulting in the formation of a stable complex. GrpE releases ADP from DnaK; ATP binding to DnaK triggers the release of the substrate protein, thus completing the reaction cycle. Several rounds of ATP-dependent interactions between DnaJ, DnaK and GrpE are required for fully efficient folding. In Streptococcus agalactiae serotype Ia (strain ATCC 27591 / A909 / CDC SS700), this protein is Protein GrpE.